A 224-amino-acid polypeptide reads, in one-letter code: Ribose-5-phosphate isomerase A (224 aa).

Substrate-binding positions include T26–T29, D82–D85, and K95–G98. Catalysis depends on E104, which acts as the Proton acceptor. K122 provides a ligand contact to substrate.

This sequence belongs to the ribose 5-phosphate isomerase family. Homodimer.

It catalyses the reaction aldehydo-D-ribose 5-phosphate = D-ribulose 5-phosphate. It functions in the pathway carbohydrate degradation; pentose phosphate pathway; D-ribose 5-phosphate from D-ribulose 5-phosphate (non-oxidative stage): step 1/1. Its function is as follows. Catalyzes the reversible conversion of ribose-5-phosphate to ribulose 5-phosphate. This Streptococcus suis (strain 98HAH33) protein is Ribose-5-phosphate isomerase A.